Reading from the N-terminus, the 469-residue chain is uncharacterized protein (469 aa).

One can recognise an HTH gntR-type domain in the interval 13–81; it reads TPLYEQLYTF…PKIGWFAAEV (69 aa). The segment at residues 41–60 is a DNA-binding region (H-T-H motif); that stretch reads KRRLSSLLDVSTATIERAYE. Position 309 is an N6-(pyridoxal phosphate)lysine (Lys309).

The protein in the C-terminal section; belongs to the class-I pyridoxal-phosphate-dependent aminotransferase family. Pyridoxal 5'-phosphate is required as a cofactor.

This is an uncharacterized protein from Bacillus subtilis (strain 168).